We begin with the raw amino-acid sequence, 202 residues long: GTP cyclohydrolase 1 (202 aa).

Residues C90, H93, and C163 each contribute to the Zn(2+) site.

Belongs to the GTP cyclohydrolase I family. As to quaternary structure, toroid-shaped homodecamer, composed of two pentamers of five dimers.

It carries out the reaction GTP + H2O = 7,8-dihydroneopterin 3'-triphosphate + formate + H(+). It functions in the pathway cofactor biosynthesis; 7,8-dihydroneopterin triphosphate biosynthesis; 7,8-dihydroneopterin triphosphate from GTP: step 1/1. This chain is GTP cyclohydrolase 1 (folE), found in Mycobacterium bovis (strain ATCC BAA-935 / AF2122/97).